Consider the following 357-residue polypeptide: S-adenosylmethionine:tRNA ribosyltransferase-isomerase (357 aa).

It belongs to the QueA family. As to quaternary structure, monomer.

The protein resides in the cytoplasm. The catalysed reaction is 7-aminomethyl-7-carbaguanosine(34) in tRNA + S-adenosyl-L-methionine = epoxyqueuosine(34) in tRNA + adenine + L-methionine + 2 H(+). It participates in tRNA modification; tRNA-queuosine biosynthesis. Transfers and isomerizes the ribose moiety from AdoMet to the 7-aminomethyl group of 7-deazaguanine (preQ1-tRNA) to give epoxyqueuosine (oQ-tRNA). This chain is S-adenosylmethionine:tRNA ribosyltransferase-isomerase, found in Hamiltonella defensa subsp. Acyrthosiphon pisum (strain 5AT).